Here is a 225-residue protein sequence, read N- to C-terminus: Uracil-DNA glycosylase (225 aa).

D65 serves as the catalytic Proton acceptor.

The protein belongs to the uracil-DNA glycosylase (UDG) superfamily. UNG family.

Its subcellular location is the cytoplasm. The catalysed reaction is Hydrolyzes single-stranded DNA or mismatched double-stranded DNA and polynucleotides, releasing free uracil.. Excises uracil residues from the DNA which can arise as a result of misincorporation of dUMP residues by DNA polymerase or due to deamination of cytosine. This chain is Uracil-DNA glycosylase, found in Bacillus cereus (strain AH187).